The primary structure comprises 73 residues: Small ribosomal subunit protein bS21 (73 aa).

Belongs to the bacterial ribosomal protein bS21 family.

The polypeptide is Small ribosomal subunit protein bS21 (Parvibaculum lavamentivorans (strain DS-1 / DSM 13023 / NCIMB 13966)).